We begin with the raw amino-acid sequence, 399 residues long: Presilphiperfolan-8-beta-ol synthase (399 aa).

The interval 1 to 60 (MAIPALEPQLHDADTSSNNMSSNSTDSGYDTNSTTPLEKSEKPNTQELKQQQLDPKRPPF) is disordered. A compositionally biased stretch (low complexity) spans 15–27 (TSSNNMSSNSTDS). A compositionally biased stretch (polar residues) spans 28–37 (GYDTNSTTPL). Aspartate 141, asparagine 285, and serine 289 together coordinate Mg(2+). The DDXXD motif signature appears at 141-145 (DDQFD). (2E,6E)-farnesyl diphosphate contacts are provided by arginine 373 and tyrosine 374.

The protein belongs to the terpene synthase family. Mg(2+) serves as cofactor.

It catalyses the reaction (2E,6E)-farnesyl diphosphate + H2O = presilphiperfolan-8beta-ol + diphosphate. It functions in the pathway secondary metabolite biosynthesis. In terms of biological role, presilphiperfolan-8-beta-ol synthase; part of the gene cluster that mediates the biosynthesis of botrydial. Botrydial is necessary for colonization of plant tissue by the T4 strain. It is a strain-dependent virulence factor since highly aggressive strains like SAS56 or B05 still retain substantial virulence when botrydial synthesis is impaired, since they produce also botcinic acid. The first step of botrydial biosynthesis is performed by the sesquiterpene synthase BOT2 which catalyzes the cyclization of farnesyl diphosphate (FPP) to presilphiperfolan-8-beta-ol (PSP). The cytochrome P450 monooxygenase BOT4 then catalyzes the hydroxylation at C-4 to give a probotryane intermediate. Acetylation of the hydroxyl at C-4 is carried out by the acetyltransferase BOT5, followed by the combined action of the P450 monooxygenases BOT3 and BOT1, to yield finally the glycol, via the regio- and stereospecific hydroxylations at C-10 and C-15 of the probotryane intermediates, respectively. The cleavage of the C10-C15 bond of probotryane skeleton is an intriguing and chemically important reaction, which could be mediated by some of the monooxygenases or by a combination of them. It is possible that either BOT3 or BOT1 would oxidize either the 10- or the 15-hydroxy group to the hydroperoxide derivative, which would then undergo heterolytic fragmentation to give the dialdehyde botrydial. Finally, the dehydrogenase BOT7 might be involved in the conversion of botrydial to dihydrobotrydial. This Botryotinia fuckeliana (Noble rot fungus) protein is Presilphiperfolan-8-beta-ol synthase (BOT2).